The chain runs to 720 residues: Catalase-peroxidase (720 aa).

The first 21 residues, Met1–Ala21, serve as a signal peptide directing secretion. A cross-link (tryptophyl-tyrosyl-methioninium (Trp-Tyr) (with M-248)) is located at residues Trp94–Tyr222. The active-site Proton acceptor is His95. A cross-link (tryptophyl-tyrosyl-methioninium (Tyr-Met) (with W-94)) is located at residues Tyr222–Met248. His263 contributes to the heme b binding site.

It belongs to the peroxidase family. Peroxidase/catalase subfamily. In terms of assembly, homodimer or homotetramer. It depends on heme b as a cofactor. Post-translationally, formation of the three residue Trp-Tyr-Met cross-link is important for the catalase, but not the peroxidase activity of the enzyme.

It catalyses the reaction H2O2 + AH2 = A + 2 H2O. The catalysed reaction is 2 H2O2 = O2 + 2 H2O. Functionally, bifunctional enzyme with both catalase and broad-spectrum peroxidase activity. The sequence is that of Catalase-peroxidase from Shewanella denitrificans (strain OS217 / ATCC BAA-1090 / DSM 15013).